A 276-amino-acid polypeptide reads, in one-letter code: Secretagogin (276 aa).

6 consecutive EF-hand domains span residues 12 to 47, 58 to 93, 105 to 140, 149 to 184, 197 to 232, and 240 to 276; these read LDAA…MLMK, NLHK…EDEN, DSSV…LFLH, KLEE…QENF, ERKR…MMEL, and VDLD…KINP. Aspartate 25, aspartate 27, tyrosine 31, glutamate 36, aspartate 71, serine 73, aspartate 75, arginine 77, glutamate 82, aspartate 118, aspartate 120, serine 122, glutamate 129, aspartate 162, asparagine 164, aspartate 166, arginine 168, aspartate 173, aspartate 210, serine 212, threonine 214, glutamate 221, aspartate 254, asparagine 256, aspartate 258, lysine 260, and glutamate 265 together coordinate Ca(2+).

Expressed at high levels in the pancreatic islets of Langerhans and to a much lesser extent in the gastrointestinal tract (stomach, small intestine and colon), the adrenal medulla and cortex and the thyroid C-cells. In the brain, the expression is restricted to distinct subtypes of neurons with highest expression in the molecular layer of the cerebellum (stellate and basket cells), in the anterior part of the pituitary gland, in the thalamus, in the hypothalamus and in a subgroup of neocortical neurons.

It localises to the cytoplasm. It is found in the secreted. The protein resides in the cytoplasmic vesicle. Its subcellular location is the secretory vesicle membrane. This Homo sapiens (Human) protein is Secretagogin (SCGN).